Reading from the N-terminus, the 463-residue chain is MNVNIKTREYTTVTEVSGPLMIVEGVEGVAYSEIVEIETPTGEKRRGQVLEVREDLAVVQVFEGTSDLNTETTKIRFTGETAKIGVSLDMMGRIFDGTGKPIDGGPEIIPEKELDINGSPMNPAAREFPAEFIQTGISTIDGMNTLVRGQKLPIFSGSGLPHNELAAQIARQAKVLAEESEFAVIFAAMGITHEEANYFMRDFERTGALERVTVFMNLADDPAIERIITPRMALTTAEYFAFEHDMHVLVILTDLTNYCEALREISAAREEVPGRRGYPGYMYTDLASLYERAGRIVGKEGSITQMPILVMPQDDITHPIPDLTGYITEGQIVLSRDLHRKGIYPPVDVLPSLSRLMSGGIGEGRTREDHSGVSDQLYSAYAEGRDLRDLMAVVGEEALTERDRKFLKFADEFEKRFITQARDEDRSIEETLNLGWELLSLLPRSELKRVREEHIPKYLPGAE.

The protein belongs to the ATPase alpha/beta chains family. As to quaternary structure, has multiple subunits with at least A(3), B(3), C, D, E, F, H, I and proteolipid K(x).

Its subcellular location is the cell membrane. Its function is as follows. Component of the A-type ATP synthase that produces ATP from ADP in the presence of a proton gradient across the membrane. The B chain is a regulatory subunit. In Methanothermobacter thermautotrophicus (strain ATCC 29096 / DSM 1053 / JCM 10044 / NBRC 100330 / Delta H) (Methanobacterium thermoautotrophicum), this protein is A-type ATP synthase subunit B.